The chain runs to 90 residues: Acylphosphatase (90 aa).

Positions 3–90 (HYHAIITGRV…AHYQDFRIKG (88 aa)) constitute an Acylphosphatase-like domain. Catalysis depends on residues Arg18 and Asn36.

It belongs to the acylphosphatase family.

It carries out the reaction an acyl phosphate + H2O = a carboxylate + phosphate + H(+). This is Acylphosphatase (acyP) from Bacillus pumilus (strain SAFR-032).